Consider the following 607-residue polypeptide: Polyadenylate-binding protein 1-like (607 aa).

RRM domains lie at S11 to R89, G99 to S175, T191 to K268, and V294 to R370. Positions H523 to E600 constitute a PABC domain.

The protein belongs to the polyadenylate-binding protein type-1 family. As to expression, expressed in ovary and testis.

It is found in the cytoplasm. Poly(A)-binding protein involved in oocyte maturation and early embryo development. It is required for cytosolic mRNA polyadenylation and translational activation of maternally stored mRNA in oocytes. The protein is Polyadenylate-binding protein 1-like of Mus musculus (Mouse).